The chain runs to 644 residues: Exoribonuclease 2 (644 aa).

The RNB domain occupies 189-516 (RRDLTALDFV…NHRLLKAIIK (328 aa)). Positions 561–643 (DTRFAAEILD…ETRSIIARPA (83 aa)) constitute an S1 motif domain.

It belongs to the RNR ribonuclease family. RNase II subfamily.

The protein resides in the cytoplasm. It carries out the reaction Exonucleolytic cleavage in the 3'- to 5'-direction to yield nucleoside 5'-phosphates.. Involved in mRNA degradation. Hydrolyzes single-stranded polyribonucleotides processively in the 3' to 5' direction. In Klebsiella pneumoniae (strain 342), this protein is Exoribonuclease 2.